A 328-amino-acid polypeptide reads, in one-letter code: Protein phosphatase 1 regulatory inhibitor subunit PPP1R7 homolog (328 aa).

LRR repeat units follow at residues 13–36 (IGDS…VELP), 37–59 (PNLI…IAQL), 61–82 (TLKK…PLSH), 86–110 (LSDL…IFTK), 111–130 (LLVY…ISKA), 131–153 (SSTL…IEHL), 154–177 (HNLQ…NFTK), 179–196 (EELW…LCGL), 197–221 (KCIK…CVAL), 223–240 (ELYL…LSAL), 241–264 (VNLR…NLTK), 266–287 (EDLW…AVTG), and 289–312 (KEKL…VAAV).

In terms of assembly, interacts with human protein phosphatase PPP1C.

Inhibitor of protein-phosphatase 1 (PP1). Binds to and inhibits PP1 activity. The chain is Protein phosphatase 1 regulatory inhibitor subunit PPP1R7 homolog from Arabidopsis thaliana (Mouse-ear cress).